The sequence spans 456 residues: Kynurenine 3-monooxygenase (456 aa).

The protein belongs to the aromatic-ring hydroxylase family. KMO subfamily. Requires FAD as cofactor.

The protein localises to the mitochondrion outer membrane. It carries out the reaction L-kynurenine + NADPH + O2 + H(+) = 3-hydroxy-L-kynurenine + NADP(+) + H2O. Its pathway is cofactor biosynthesis; NAD(+) biosynthesis; quinolinate from L-kynurenine: step 1/3. Functionally, catalyzes the hydroxylation of L-kynurenine (L-Kyn) to form 3-hydroxy-L-kynurenine (L-3OHKyn). Required for synthesis of quinolinic acid. The protein is Kynurenine 3-monooxygenase of Candida albicans (strain SC5314 / ATCC MYA-2876) (Yeast).